The chain runs to 494 residues: DBIRD complex subunit ZNF326 (494 aa).

Disordered regions lie at residues 1–22, 147–170, and 202–264; these read MDREYGSYNQRSVNSYGNQSFS, AFGGRSNDAFGGPSKGRGRGRGQM, and KMAP…NSEK. The segment covering 7–22 has biased composition (polar residues); that stretch reads SYNQRSVNSYGNQSFS. The Bipartite nuclear localization signal motif lies at 200 to 221; it reads KRKMAPPFKPVGFFGKKQKLSK. 2 C2H2 AKAP95-type zinc fingers span residues 273–295 and 365–388; these read CSFCKFRSFDEKGIEEHLTSATH and CSACSVYVPALHSSVQLHLKSADH. The tract at residues 429–494 is disordered; it reads PFETQPDEQQ…CDPLTTTDEV (66 aa). Residues 433-451 are compositionally biased toward acidic residues; the sequence is QPDEQQQEQEEEEEEEEQQ.

It belongs to the AKAP95 family. Component of the DBIRD complex.

It is found in the nucleus. Functionally, core component of the DBIRD complex, a multiprotein complex that acts at the interface between core mRNP particles and RNA polymerase II (RNAPII) and integrates transcript elongation with the regulation of alternative splicing. The polypeptide is DBIRD complex subunit ZNF326 (znf326) (Xenopus laevis (African clawed frog)).